Here is a 186-residue protein sequence, read N- to C-terminus: Casparian strip membrane protein 1 (186 aa).

The Cytoplasmic portion of the chain corresponds to 1-26 (MKGGSIELGEVSKNASTNKGVKRGLS). Residues 27-47 (IMDFILRIIAGVATLASAVAM) traverse the membrane as a helical segment. At 48–72 (GTTDERLPFATSFVQFRAEYDDLPS) the chain is on the extracellular side. A helical membrane pass occupies residues 73–93 (FVFFVLANSIVCGYLALSLIL). Topologically, residues 94-107 (SILHIVRSTAVKSR) are cytoplasmic. A helical membrane pass occupies residues 108–128 (ILLIVLDMVMMGLLAAAASAA). At 129–157 (ASIVYIAHYGNTQANWFPICQQYNSFCER) the chain is on the extracellular side. The helical transmembrane segment at 158-178 (ISGSLIGSYIAVALFIIIILL) threads the bilayer. Residues 179 to 186 (SQSAISRN) lie on the Cytoplasmic side of the membrane.

The protein belongs to the Casparian strip membrane proteins (CASP) family. Homodimer and heterodimers.

It is found in the cell membrane. Its function is as follows. Regulates membrane-cell wall junctions and localized cell wall deposition. Required for establishment of the Casparian strip membrane domain (CSD) and the subsequent formation of Casparian strips, a cell wall modification of the root endodermis that determines an apoplastic barrier between the intraorganismal apoplasm and the extraorganismal apoplasm and prevents lateral diffusion. The protein is Casparian strip membrane protein 1 of Medicago truncatula (Barrel medic).